The chain runs to 734 residues: NAD(P)H-quinone oxidoreductase subunit 5, chloroplastic (734 aa).

The next 12 membrane-spanning stretches (helical) occupy residues 9–29 (WIIPLLPLVSSITIGLGLFFF), 40–60 (YAIISTLLLSIAMFISFDLLW), 89–109 (IDPLTSIMLVLVTTIGVTVMI), 121–140 (YVRFFAYLSLSTASMLGLVI), 144–166 (LIQIYIFRELVGMCSYLLIGFWF), 185–205 (GDFGLLLGTSGFYWITGSFKF), 219–239 (HEVSLFLATPCALLFPLGPVA), 258–278 (TPISAPIHAATMVAAGIFLVA), 289–311 (LVMSSISWVGGVTASLGATVALA), 318–338 (VLAYSTMSQLGYMMLALGIGS), 395–415 (GTTFLLGTLSLCGIPPLACFW), and 425–445 (WLYFPILGWIARFTAGLTGFY). The segment at 512–534 (DKNVKNSVSTQSSREEYSPHPKE) is disordered. Residues 524–534 (SREEYSPHPKE) show a composition bias toward basic and acidic residues. A run of 3 helical transmembrane segments spans residues 539-559 (MLFPLLILTIPTLLVGFIGVP), 601-621 (VGTASLGIFTASILYGPIPFF), and 707-727 (ISYYLFGFISGTIILLLVVIN).

Belongs to the complex I subunit 5 family. NDH is composed of at least 16 different subunits, 5 of which are encoded in the nucleus.

It localises to the plastid. The protein localises to the chloroplast thylakoid membrane. The catalysed reaction is a plastoquinone + NADH + (n+1) H(+)(in) = a plastoquinol + NAD(+) + n H(+)(out). It catalyses the reaction a plastoquinone + NADPH + (n+1) H(+)(in) = a plastoquinol + NADP(+) + n H(+)(out). NDH shuttles electrons from NAD(P)H:plastoquinone, via FMN and iron-sulfur (Fe-S) centers, to quinones in the photosynthetic chain and possibly in a chloroplast respiratory chain. The immediate electron acceptor for the enzyme in this species is believed to be plastoquinone. Couples the redox reaction to proton translocation, and thus conserves the redox energy in a proton gradient. The sequence is that of NAD(P)H-quinone oxidoreductase subunit 5, chloroplastic (ndhF) from Huperzia lucidula (Shining clubmoss).